Reading from the N-terminus, the 106-residue chain is MTDVTGAPADVLHTLFHSDQGGHEQVVLCQDRASGLKAVIALHSTALGPALGGTRFYPIANEAEAVADALNLARGMSYKNAMAGLEHGGGKAVIIGDPEQIKSEEL.

K91 is a catalytic residue.

The protein belongs to the Glu/Leu/Phe/Val dehydrogenases family. In terms of assembly, homodimer.

The protein resides in the cytoplasm. It catalyses the reaction L-valine + NAD(+) + H2O = 3-methyl-2-oxobutanoate + NH4(+) + NADH + H(+). It participates in amino-acid degradation; L-valine degradation. Its function is as follows. Oxidative deamination of branched-chain amino acids. The catabolism of valine is the major source of fatty acid precursors for macrolide biosynthesis and a vital source of antibiotic precursors. This Streptomyces ambofaciens protein is Valine dehydrogenase (vdh).